Reading from the N-terminus, the 148-residue chain is Large ribosomal subunit protein bL27m (148 aa).

Residues 1-30 constitute a mitochondrion transit peptide; it reads MAAAALTLRTRAAVTALLSPTAPTALAVRH. The tract at residues 28-48 is disordered; the sequence is VRHASKKTGGSSKNLGGKSRG.

It belongs to the bacterial ribosomal protein bL27 family. As to quaternary structure, component of the mitochondrial ribosome large subunit (39S) which comprises a 16S rRNA and about 50 distinct proteins.

Its subcellular location is the mitochondrion. The chain is Large ribosomal subunit protein bL27m (Mrpl27) from Mus musculus (Mouse).